The primary structure comprises 37 residues: U1-theraphotoxin-Hs1b (37 aa).

3 cysteine pairs are disulfide-bonded: C4-C18, C8-C29, and C23-C34.

As to quaternary structure, form 1 and form 2 may dimerize. As to expression, expressed by the venom gland.

The protein resides in the secreted. Functionally, lethal neurotoxin that blocks neuromuscular transmission. Acts cooperatively to potentiate the activity of huwentoxin-I. The protein is U1-theraphotoxin-Hs1b of Cyriopagopus schmidti (Chinese bird spider).